The sequence spans 196 residues: DnaA initiator-associating protein DiaA (196 aa).

One can recognise an SIS domain in the interval leucine 34–aspartate 196.

It belongs to the SIS family. DiaA subfamily. In terms of assembly, homotetramer; dimer of dimers.

Required for the timely initiation of chromosomal replication via direct interactions with the DnaA initiator protein. The polypeptide is DnaA initiator-associating protein DiaA (Yersinia pseudotuberculosis serotype O:1b (strain IP 31758)).